The primary structure comprises 261 residues: MYLEKLRSQNPLTICITNDVVKNFTANGLLALGASPAMSEYPEDLEDLLPYTKGLLINTGTLTNETWELYKSALDIAEKYGVPTVLDPVAAGAGAYRKKVTLDLLHHHTISLVRGNAGEIAALIGESIETKGVDSAQIDNVGELALRANQQLGIPVVITGKKDAVAVNHQVRILENGSELMPLVTGTGCLLGAVLAAFIHLADEDSLLDCLEEVLSAYSIAGEMAEQKTSLPGTFQIEFINSLYAIQSEEVEENKKVIHYE.

Substrate is bound at residue Met38. ATP is bound by residues Arg114 and Thr159. Gly186 contacts substrate.

The protein belongs to the Thz kinase family. Mg(2+) is required as a cofactor.

The enzyme catalyses 5-(2-hydroxyethyl)-4-methylthiazole + ATP = 4-methyl-5-(2-phosphooxyethyl)-thiazole + ADP + H(+). Its pathway is cofactor biosynthesis; thiamine diphosphate biosynthesis; 4-methyl-5-(2-phosphoethyl)-thiazole from 5-(2-hydroxyethyl)-4-methylthiazole: step 1/1. Catalyzes the phosphorylation of the hydroxyl group of 4-methyl-5-beta-hydroxyethylthiazole (THZ). The polypeptide is Hydroxyethylthiazole kinase (Streptococcus suis (strain 05ZYH33)).